Consider the following 797-residue polypeptide: Ent-atiserene synthase KSL1, chloroplastic (797 aa).

Residues 1-48 constitute a chloroplast transit peptide; it reads LVKDDMSLILSSFSLFRSSRSSPASASLAGSGHPRTTPPKIASLQSPM. Over residues 21–32 the composition is skewed to low complexity; that stretch reads SSPASASLAGSG. Residues 21-47 are disordered; that stretch reads SSPASASLAGSGHPRTTPPKIASLQSP. Mg(2+) is bound by residues Asp-547, Asp-551, Asn-691, and Glu-699. The DDXXD motif signature appears at 547-551; the sequence is DDLFD.

This sequence belongs to the terpene synthase family. The cofactor is Mg(2+).

It localises to the plastid. It is found in the chloroplast. The catalysed reaction is ent-copalyl diphosphate = ent-atiserene + diphosphate. Its pathway is secondary metabolite biosynthesis; terpenoid biosynthesis. Its function is as follows. Involved in the biosynthesis of ent-kaurene diterpenoids natural products such as oridonin, miltiradiene, eriocalyxin B and nezukol, known to exhibit antitumor, anti-inflammatory and antibacterial activities. Catalyzes the conversion of ent-copalyl diphosphate (ent-CPP) to ent-atiserene. The polypeptide is Ent-atiserene synthase KSL1, chloroplastic (Isodon japonicus (Scutellaria japonica)).